The following is a 445-amino-acid chain: Trigger factor (445 aa).

Residues 162-247 enclose the PPIase FKBP-type domain; the sequence is GDQVTIDAIG…IKAVHTAEPT (86 aa).

This sequence belongs to the FKBP-type PPIase family. Tig subfamily.

The protein resides in the cytoplasm. It carries out the reaction [protein]-peptidylproline (omega=180) = [protein]-peptidylproline (omega=0). In terms of biological role, involved in protein export. Acts as a chaperone by maintaining the newly synthesized protein in an open conformation. Functions as a peptidyl-prolyl cis-trans isomerase. The sequence is that of Trigger factor from Rickettsia akari (strain Hartford).